The chain runs to 210 residues: Cytochrome c oxidase subunit 2 (210 aa).

Topologically, residues 1-20 are mitochondrial intermembrane; sequence MAFILSFWMIFLLDSVIVLL. The chain crosses the membrane as a helical span at residues 21-42; the sequence is SFVCFVCVWICALLFSTVLLVS. At 43-60 the chain is on the mitochondrial matrix side; that stretch reads KLNNIYCTWDFTASKFID. A helical membrane pass occupies residues 61–86; that stretch reads VYWFTIGGMFSLGLLLRLCLLLYFGH. Topologically, residues 87–210 are mitochondrial intermembrane; the sequence is LNFVSFDLCK…GFMPIVICFI (124 aa). Residues His-157, Cys-192, Glu-194, Cys-196, His-200, and Met-203 each coordinate Cu cation. Glu-194 is a binding site for Mg(2+).

Belongs to the cytochrome c oxidase subunit 2 family. As to quaternary structure, component of the cytochrome c oxidase (complex IV, CIV), a multisubunit enzyme composed of a catalytic core of 3 subunits and several supernumerary subunits. The complex exists as a monomer or a dimer and forms supercomplexes (SCs) in the inner mitochondrial membrane with ubiquinol-cytochrome c oxidoreductase (cytochrome b-c1 complex, complex III, CIII). Cu cation serves as cofactor.

It is found in the mitochondrion inner membrane. The catalysed reaction is 4 Fe(II)-[cytochrome c] + O2 + 8 H(+)(in) = 4 Fe(III)-[cytochrome c] + 2 H2O + 4 H(+)(out). Its function is as follows. Component of the cytochrome c oxidase, the last enzyme in the mitochondrial electron transport chain which drives oxidative phosphorylation. The respiratory chain contains 3 multisubunit complexes succinate dehydrogenase (complex II, CII), ubiquinol-cytochrome c oxidoreductase (cytochrome b-c1 complex, complex III, CIII) and cytochrome c oxidase (complex IV, CIV), that cooperate to transfer electrons derived from NADH and succinate to molecular oxygen, creating an electrochemical gradient over the inner membrane that drives transmembrane transport and the ATP synthase. Cytochrome c oxidase is the component of the respiratory chain that catalyzes the reduction of oxygen to water. Electrons originating from reduced cytochrome c in the intermembrane space (IMS) are transferred via the dinuclear copper A center (CU(A)) of subunit 2 and heme A of subunit 1 to the active site in subunit 1, a binuclear center (BNC) formed by heme A3 and copper B (CU(B)). The BNC reduces molecular oxygen to 2 water molecules using 4 electrons from cytochrome c in the IMS and 4 protons from the mitochondrial matrix. The chain is Cytochrome c oxidase subunit 2 from Leishmania tarentolae (Sauroleishmania tarentolae).